Here is a 1380-residue protein sequence, read N- to C-terminus: DNA-directed RNA polymerase subunit beta (1380 aa).

This sequence belongs to the RNA polymerase beta chain family. The RNAP catalytic core consists of 2 alpha, 1 beta, 1 beta' and 1 omega subunit. When a sigma factor is associated with the core the holoenzyme is formed, which can initiate transcription.

The catalysed reaction is RNA(n) + a ribonucleoside 5'-triphosphate = RNA(n+1) + diphosphate. Functionally, DNA-dependent RNA polymerase catalyzes the transcription of DNA into RNA using the four ribonucleoside triphosphates as substrates. This Ehrlichia ruminantium (strain Gardel) protein is DNA-directed RNA polymerase subunit beta.